The primary structure comprises 293 residues: Probable 2-(5''-triphosphoribosyl)-3'-dephosphocoenzyme-A synthase (293 aa).

The protein belongs to the CitG/MdcB family.

It carries out the reaction 3'-dephospho-CoA + ATP = 2'-(5''-triphospho-alpha-D-ribosyl)-3'-dephospho-CoA + adenine. Involved in the formation of 2-(5''-phosphoribosyl)-3'-dephosphocoenzyme-A, the prosthetic group of the acyl-carrier protein of the malonate decarboxylase. This chain is Probable 2-(5''-triphosphoribosyl)-3'-dephosphocoenzyme-A synthase, found in Pseudomonas aeruginosa (strain ATCC 15692 / DSM 22644 / CIP 104116 / JCM 14847 / LMG 12228 / 1C / PRS 101 / PAO1).